Consider the following 288-residue polypeptide: 4-hydroxybenzoate octaprenyltransferase (288 aa).

The next 6 membrane-spanning stretches (helical) occupy residues 33–53 (LWAL…AVFV), 99–119 (LFIV…TMTI), 163–183 (ESLP…AVAY), 213–233 (LIIG…GWLN), 234–254 (GLGW…GWQQ), and 268–288 (AFMN…MSYL).

It belongs to the UbiA prenyltransferase family. It depends on Mg(2+) as a cofactor.

Its subcellular location is the cell inner membrane. It catalyses the reaction all-trans-octaprenyl diphosphate + 4-hydroxybenzoate = 4-hydroxy-3-(all-trans-octaprenyl)benzoate + diphosphate. It functions in the pathway cofactor biosynthesis; ubiquinone biosynthesis. In terms of biological role, catalyzes the prenylation of para-hydroxybenzoate (PHB) with an all-trans polyprenyl group. Mediates the second step in the final reaction sequence of ubiquinone-8 (UQ-8) biosynthesis, which is the condensation of the polyisoprenoid side chain with PHB, generating the first membrane-bound Q intermediate 3-octaprenyl-4-hydroxybenzoate. The polypeptide is 4-hydroxybenzoate octaprenyltransferase (Klebsiella pneumoniae subsp. pneumoniae (strain ATCC 700721 / MGH 78578)).